We begin with the raw amino-acid sequence, 227 residues long: MTRGKSFVTIKGTKDGLTFLLDDRCSFDELIKELTDKLSANYYKSGEEERPVYVKMDLGNRYLNEEDKAQLEAVVTEGRNMRIEHYDSGVISWEEAQLMKEHAQTTTLTRMIRSGQVVHVKGNVLLVGDINPGGLLTATGSIYVMGALKGRAHAGFEGKRDARICAAMMAPAGLQIADESLYFVDKDEAVEDHMKAAFLDEVNGSIRIERVQRLLDVAAEINKEAVS.

The protein belongs to the MinC family. As to quaternary structure, interacts with MinD and FtsZ.

In terms of biological role, cell division inhibitor that blocks the formation of polar Z ring septums. Rapidly oscillates between the poles of the cell to destabilize FtsZ filaments that have formed before they mature into polar Z rings. Prevents FtsZ polymerization. This is Probable septum site-determining protein MinC from Shouchella clausii (strain KSM-K16) (Alkalihalobacillus clausii).